The sequence spans 419 residues: Arginine biosynthesis bifunctional protein ArgJ 1, mitochondrial (419 aa).

The substrate site is built by lysine 177, threonine 188, glutamate 275, asparagine 414, and threonine 419. The active-site Nucleophile is the threonine 188.

This sequence belongs to the ArgJ family. In terms of assembly, heterodimer of an alpha and a beta chain. The alpha and beta chains are autoproteolytically processed from a single precursor protein within the mitochondrion.

Its subcellular location is the mitochondrion matrix. The enzyme catalyses N(2)-acetyl-L-ornithine + L-glutamate = N-acetyl-L-glutamate + L-ornithine. It carries out the reaction L-glutamate + acetyl-CoA = N-acetyl-L-glutamate + CoA + H(+). It participates in amino-acid biosynthesis; L-arginine biosynthesis; L-ornithine and N-acetyl-L-glutamate from L-glutamate and N(2)-acetyl-L-ornithine (cyclic): step 1/1. It functions in the pathway amino-acid biosynthesis; L-arginine biosynthesis; N(2)-acetyl-L-ornithine from L-glutamate: step 1/4. Its function is as follows. Catalyzes two activities which are involved in the cyclic version of arginine biosynthesis: the synthesis of acetylglutamate from glutamate and acetyl-CoA, and of ornithine by transacetylation between acetylornithine and glutamate. This chain is Arginine biosynthesis bifunctional protein ArgJ 1, mitochondrial, found in Sclerotinia sclerotiorum (strain ATCC 18683 / 1980 / Ss-1) (White mold).